The chain runs to 917 residues: Protein FAN (917 aa).

Positions R176–R247 constitute a GRAM domain. Residues N189 to A286 form the BEACH-type PH domain. In terms of domain architecture, BEACH spans E290 to R575. 6 WD repeats span residues I628–S658, F670–S700, G712–S740, E761–D791, C803–D833, and G884–K914.

Ubiquitous.

Its function is as follows. Couples the p55 TNF-receptor (TNF-R55 / TNFR1) to neutral sphingomyelinase (N-SMASE). Specifically binds to the N-smase activation domain of TNF-R55. May regulate ceramide production by N-SMASE. The sequence is that of Protein FAN (NSMAF) from Homo sapiens (Human).